Consider the following 260-residue polypeptide: Proteasome subunit alpha (260 aa).

The tract at residues 241 to 260 (VEAEEVPEKEEDYSELDSNY) is disordered. Positions 242 to 260 (EAEEVPEKEEDYSELDSNY) are enriched in acidic residues.

This sequence belongs to the peptidase T1A family. As to quaternary structure, the 20S proteasome core is composed of 14 alpha and 14 beta subunits that assemble into four stacked heptameric rings, resulting in a barrel-shaped structure. The two inner rings, each composed of seven catalytic beta subunits, are sandwiched by two outer rings, each composed of seven alpha subunits. The catalytic chamber with the active sites is on the inside of the barrel. Has a gated structure, the ends of the cylinder being occluded by the N-termini of the alpha-subunits. Is capped at one or both ends by the proteasome regulatory ATPase, PAN.

The protein localises to the cytoplasm. The formation of the proteasomal ATPase PAN-20S proteasome complex, via the docking of the C-termini of PAN into the intersubunit pockets in the alpha-rings, triggers opening of the gate for substrate entry. Interconversion between the open-gate and close-gate conformations leads to a dynamic regulation of the 20S proteasome proteolysis activity. Functionally, component of the proteasome core, a large protease complex with broad specificity involved in protein degradation. The protein is Proteasome subunit alpha of Thermococcus sibiricus (strain DSM 12597 / MM 739).